We begin with the raw amino-acid sequence, 424 residues long: MAALAVLHGVVRRPLLRGLLQEVRCLGRSYASKPTLNDVVIVSATRTPIGSFLGSLASQPATKLGTIAIQGAIEKAGIPKEEVKEVYMGNVIQGGEGQAPTRQATLGAGLPIATPCTTVNKVCASGMKAIMMASQSLMCGHQDVMVAGGMESMSNVPYVMSRGATPYGGVKLEDLIVKDGLTDVYNKIHMGNCAENTAKKLSISREEQDKYAIGSYTRSKEAWDAGKFANEITPITISVKGKPDVVVKEDEEYKRVDFSKVPKLKTVFQKENGTVTAANASTLNDGAAAVVLMTAEAAQRLKVKPLARIAAFADAAVDPIDFPLAPAYAVPKVLKYAGLKKEDIAMWEVNEAFSVVVLANIKMLEIDPQKVNVHGGAVSLGHPIGMSGARIVVHLAHALKQGEFGLASICNGGGGASAVLIEKL.

A mitochondrion-targeting transit peptide spans 1–30 (MAALAVLHGVVRRPLLRGLLQEVRCLGRSY). At Lys63 the chain carries N6-acetyllysine; alternate. Lys63 carries the N6-succinyllysine; alternate modification. Lys75 is modified (N6-succinyllysine). Cys123 serves as the catalytic Acyl-thioester intermediate. N6-acetyllysine; alternate occurs at positions 171, 178, 187, and 199. Lys171, Lys178, Lys187, and Lys199 each carry N6-succinyllysine; alternate. Ser204 carries the phosphoserine modification. Tyr216 serves as a coordination point for CoA. Tyr216 is a K(+) binding site. An N6-acetyllysine; alternate mark is found at Lys220 and Lys227. 2 positions are modified to N6-succinyllysine; alternate: Lys220 and Lys227. Position 240 is an N6-succinyllysine (Lys240). An N6-acetyllysine; alternate modification is found at Lys242. N6-succinyllysine; alternate is present on Lys242. An N6-acetyllysine mark is found at Lys248 and Lys254. Residues 255-257 (RVD) and Lys260 each bind CoA. Lys260 is modified (N6-acetyllysine; alternate). At Lys260 the chain carries N6-succinyllysine; alternate. N6-succinyllysine occurs at positions 263 and 265. Lys270 is modified (N6-acetyllysine). K(+) is bound by residues Ala277, Ala278, and Ala280. A CoA-binding site is contributed by Ser281. N6-acetyllysine is present on Lys335. Val378 contacts K(+). Residue Cys410 is the Proton donor/acceptor of the active site.

Belongs to the thiolase-like superfamily. Thiolase family. In terms of assembly, homotetramer. Post-translationally, succinylation at Lys-265, adjacent to a coenzyme A binding site. Desuccinylated by SIRT5.

Its subcellular location is the mitochondrion. It carries out the reaction 2 acetyl-CoA = acetoacetyl-CoA + CoA. The enzyme catalyses propanoyl-CoA + acetyl-CoA = 2-methyl-3-oxobutanoyl-CoA + CoA. The protein operates within lipid metabolism; fatty acid beta-oxidation. Activated by potassium ions, but not sodium ions. Its function is as follows. This is one of the enzymes that catalyzes the last step of the mitochondrial beta-oxidation pathway, an aerobic process breaking down fatty acids into acetyl-CoA. Using free coenzyme A/CoA, catalyzes the thiolytic cleavage of medium- to long-chain 3-oxoacyl-CoAs into acetyl-CoA and a fatty acyl-CoA shortened by two carbon atoms. The activity of the enzyme is reversible and it can also catalyze the condensation of two acetyl-CoA molecules into acetoacetyl-CoA. Thereby, it plays a major role in ketone body metabolism. This Rattus norvegicus (Rat) protein is Acetyl-CoA acetyltransferase, mitochondrial (Acat1).